The primary structure comprises 390 residues: 2-oxoisovalerate dehydrogenase subunit beta, mitochondrial (390 aa).

Residues 1–48 (MAAVAARAGGLLRLGAAGAERRRRGLRCAALVQGFLQPAVDDASQKRR) constitute a mitochondrion transit peptide. Tyr150 contacts thiamine diphosphate. Residues Gly176, Leu178, Thr179, Cys226, and Asp229 each contribute to the K(+) site. Lys230 carries the post-translational modification N6-acetyllysine. Asn231 lines the K(+) pocket. An N6-acetyllysine modification is found at Lys239.

In terms of assembly, heterotetramer of 2 alpha/BCKDHA and 2 beta chains/BCKDHB that forms the branched-chain alpha-keto acid decarboxylase (E1) component of the BCKD complex. The branched-chain alpha-ketoacid dehydrogenase is a large complex composed of three major building blocks E1, E2 and E3. It is organized around E2, a 24-meric cubic core composed of DBT, to which are associated 6 to 12 copies of E1, and approximately 6 copies of the dehydrogenase E3, a DLD dimer. It depends on thiamine diphosphate as a cofactor.

The protein resides in the mitochondrion matrix. The enzyme catalyses N(6)-[(R)-lipoyl]-L-lysyl-[protein] + 3-methyl-2-oxobutanoate + H(+) = N(6)-[(R)-S(8)-2-methylpropanoyldihydrolipoyl]-L-lysyl-[protein] + CO2. Its function is as follows. Together with BCKDHA forms the heterotetrameric E1 subunit of the mitochondrial branched-chain alpha-ketoacid dehydrogenase (BCKD) complex. The BCKD complex catalyzes the multi-step oxidative decarboxylation of alpha-ketoacids derived from the branched-chain amino-acids valine, leucine and isoleucine producing CO2 and acyl-CoA which is subsequently utilized to produce energy. The E1 subunit catalyzes the first step with the decarboxylation of the alpha-ketoacid forming an enzyme-product intermediate. A reductive acylation mediated by the lipoylamide cofactor of E2 extracts the acyl group from the E1 active site for the next step of the reaction. In Rattus norvegicus (Rat), this protein is 2-oxoisovalerate dehydrogenase subunit beta, mitochondrial.